A 365-amino-acid chain; its full sequence is Flagellar P-ring protein (365 aa).

A signal peptide spans 1 to 21 (MKSLRLVALFCCLLPLGMAHA).

The protein belongs to the FlgI family. The basal body constitutes a major portion of the flagellar organelle and consists of four rings (L,P,S, and M) mounted on a central rod.

The protein localises to the periplasm. The protein resides in the bacterial flagellum basal body. Functionally, assembles around the rod to form the L-ring and probably protects the motor/basal body from shearing forces during rotation. This is Flagellar P-ring protein from Aeromonas hydrophila subsp. hydrophila (strain ATCC 7966 / DSM 30187 / BCRC 13018 / CCUG 14551 / JCM 1027 / KCTC 2358 / NCIMB 9240 / NCTC 8049).